Here is a 463-residue protein sequence, read N- to C-terminus: MTIEKNLSDVQQKYADQFQEDVVKSFQTGYGITPDTQIDAGALRREILDDQITMLTWTNEDLIFYRDISRRPAQSTVVKYDQYLRHGNVGHSRFVKEIGVAPVSDPNIRQKTVSMKYVSDTKNMSIASGLVNNIADPSQILTEDAIAVVAKTIEWASFYGDASLTSEVEGEGLEFDGLAKLIDKNNVINAKGNQLTEKHLNEAAVRIGKGFGTATDAYMPIGVHADFVNSILGRQMQLMQDNSGNVNTGYSVNGFYSSRGFIKLHGSTVMENELILDESLQPLPNAPQPAKVTATVETKQKGAFENEEDRAGLSYKVVVNSDDAQSAPSEEVTATVSNVDDGVKLSINVNAMYQQQPQFVSIYRQGKETGMYFLIKRVPVKDAQEDGTIVFVDKNETLPETADVFVGEMSPQVVHLFELLPMMKLPLAQINASITFAVLWYGALALRAPKKWARIKNVRYIAV.

Residues 1 to 24 constitute a propeptide that is removed on maturation; that stretch reads MTIEKNLSDVQQKYADQFQEDVVK.

It localises to the virion. Its function is as follows. Assembles to form an icosahedral capsid. The sequence is that of Major capsid protein from Staphylococcus phage K.